A 309-amino-acid chain; its full sequence is Verprolin (309 aa).

Over residues 1–13 the composition is skewed to pro residues; the sequence is MAPAPPPPPPAPA. The interval 1–273 is disordered; sequence MAPAPPPPPP…PNRVDDHGRF (273 aa). The region spanning 27–44 is the WH2 domain; sequence DRSALLNSIQKGKKLKKA. Over residues 82–91 the composition is skewed to polar residues; sequence LPTSSNNTQQ. Residues 141–207 are compositionally biased toward pro residues; the sequence is TSAPPRPSIP…PPKVPPPPLS (67 aa).

It belongs to the verprolin family. As to quaternary structure, interacts with wsp1. Interacts with myo1 (via SH3 domain). Interacts with actin monomers.

The protein localises to the cytoplasm. It is found in the cytoskeleton. Its function is as follows. Involved in cytoskeletal organization and cellular growth. May exert its effects on the cytoskeleton directly, or indirectly via proline-binding proteins such as profilin or proteins possessing SH3 domains. Plays a role in actin patch assembly by enhancing the ability of myo1 to stimulate actin polymerization by the Arp2/3 complex. This is Verprolin from Schizosaccharomyces pombe (strain 972 / ATCC 24843) (Fission yeast).